Reading from the N-terminus, the 454-residue chain is Oxygen-dependent coproporphyrinogen-III oxidase, mitochondrial (454 aa).

A mitochondrion-targeting transit peptide spans 1 to 110 (MALQLGRLSS…MLPKTSGTRA (110 aa)). The tract at residues 43–70 (AAGRVCRPPGPAGTEQSRGLGHGSTSRG) is disordered. At Ser-112 the chain carries Phosphoserine. Residues 193–202 (VLQDGCVFEK) form an important for dimerization region. Ser-244 contacts coproporphyrinogen III. His-258 functions as the Proton donor in the catalytic mechanism. 260 to 262 (NYR) contributes to the coproporphyrinogen III binding site. The segment at 392–428 (YVEFNLLYDRGTKFGLFTPGSRIESILMSLPLTARWE) is important for dimerization. The residue at position 404 (Lys-404) is an N6-acetyllysine; alternate. Lys-404 is subject to N6-succinyllysine; alternate. 411-413 (GSR) serves as a coordination point for coproporphyrinogen III.

It belongs to the aerobic coproporphyrinogen-III oxidase family. In terms of assembly, homodimer.

The protein localises to the mitochondrion intermembrane space. It carries out the reaction coproporphyrinogen III + O2 + 2 H(+) = protoporphyrinogen IX + 2 CO2 + 2 H2O. It functions in the pathway porphyrin-containing compound metabolism; protoporphyrin-IX biosynthesis; protoporphyrinogen-IX from coproporphyrinogen-III (O2 route): step 1/1. Catalyzes the aerobic oxidative decarboxylation of propionate groups of rings A and B of coproporphyrinogen-III to yield the vinyl groups in protoporphyrinogen-IX and participates to the sixth step in the heme biosynthetic pathway. The protein is Oxygen-dependent coproporphyrinogen-III oxidase, mitochondrial of Homo sapiens (Human).